Reading from the N-terminus, the 329-residue chain is Type 2 lactosamine alpha-2,3-sialyltransferase (329 aa).

Residues 1-4 are Cytoplasmic-facing; sequence MKGY. The helical; Signal-anchor for type II membrane protein transmembrane segment at 5 to 25 threads the bilayer; the sequence is LVAIFLSSIFLYYVLYCILWG. At 26-329 the chain is on the lumenal side; that stretch reads TNGYWFPAEE…IKKKMVINLT (304 aa). Asn129, Asn181, Asn295, and Asn308 each carry an N-linked (GlcNAc...) asparagine glycan.

The protein belongs to the glycosyltransferase 29 family.

The protein localises to the golgi apparatus membrane. The enzyme catalyses a neolactoside nLc4Cer(d18:1(4E)) + CMP-N-acetyl-beta-neuraminate = a neolactoside IV(3)-alpha-NeuAc-nLc4Cer(d18:1(4E)) + CMP + H(+). It catalyses the reaction a beta-D-galactosyl-(1-&gt;4)-N-acetyl-beta-D-glucosaminyl derivative + CMP-N-acetyl-beta-neuraminate = an N-acetyl-alpha-neuraminyl-(2-&gt;3)-beta-D-galactosyl-(1-&gt;4)-N-acetyl-beta-D-glucosaminyl derivative + CMP + H(+). The catalysed reaction is a neolactoside nLc6Cer(d18:1(4E)) + CMP-N-acetyl-beta-neuraminate = a neolactoside VI(3)-alpha-NeuNAc-nLc6Cer(d18:1(4E)) + CMP + H(+). Its function is as follows. Transfers the sialyl residue from CMP-N-acetyl-beta-neuraminate to the terminal galactose residue on sugar chains of glycoproteins and glycolipids. It's alpha-2,3-sialyltransferase activity is specific toward type II glycan chains (Galbeta1-4GlcNAc) on glycoproteins and glycolipids such as neolactosides nLc4Cer and nLc6Cer, whose sialyl-products serve as precursors for the Lewis X antigen. Critically involved in the synthesis of functional selectin ligands needed for neutrophil recruitment during inflammation and lymphocyte homing to the lymph nodes. This is Type 2 lactosamine alpha-2,3-sialyltransferase (St3gal6) from Mus musculus (Mouse).